Reading from the N-terminus, the 232-residue chain is 2,3,4,5-tetrahydropyridine-2,6-dicarboxylate N-acetyltransferase (232 aa).

This sequence belongs to the transferase hexapeptide repeat family. DapH subfamily.

It carries out the reaction (S)-2,3,4,5-tetrahydrodipicolinate + acetyl-CoA + H2O = L-2-acetamido-6-oxoheptanedioate + CoA. It participates in amino-acid biosynthesis; L-lysine biosynthesis via DAP pathway; LL-2,6-diaminopimelate from (S)-tetrahydrodipicolinate (acetylase route): step 1/3. In terms of biological role, catalyzes the transfer of an acetyl group from acetyl-CoA to tetrahydrodipicolinate. The polypeptide is 2,3,4,5-tetrahydropyridine-2,6-dicarboxylate N-acetyltransferase (Streptococcus gordonii (strain Challis / ATCC 35105 / BCRC 15272 / CH1 / DL1 / V288)).